Here is a 240-residue protein sequence, read N- to C-terminus: Uridylate kinase (240 aa).

ATP is bound at residue 14–17; it reads KLSG. Gly-56 contacts UMP. ATP is bound by residues Gly-57 and Arg-61. Residues Asp-76 and 137-144 contribute to the UMP site; that span reads TGNPFFTT. The ATP site is built by Thr-164, Tyr-170, and Asp-173.

Belongs to the UMP kinase family. Homohexamer.

The protein localises to the cytoplasm. It carries out the reaction UMP + ATP = UDP + ADP. The protein operates within pyrimidine metabolism; CTP biosynthesis via de novo pathway; UDP from UMP (UMPK route): step 1/1. Its activity is regulated as follows. Inhibited by UTP. Functionally, catalyzes the reversible phosphorylation of UMP to UDP. In Verminephrobacter eiseniae (strain EF01-2), this protein is Uridylate kinase.